The following is a 199-amino-acid chain: uncharacterized protein (199 aa).

It is found in the mitochondrion. This is an uncharacterized protein from Schizosaccharomyces pombe (strain 972 / ATCC 24843) (Fission yeast).